A 281-amino-acid polypeptide reads, in one-letter code: Glyoxalase 1 (281 aa).

VOC domains follow at residues 4-127 and 132-251; these read RALH…IGKA and KVLR…FVGD.

Belongs to the glyoxalase I family.

Thought to act as a glyoxalase. May remove methylglyoxal from mitochondrial proteins. Has roles in reducing oxidative stress and increasing lifespan. The protein is Glyoxalase 1 of Caenorhabditis briggsae.